A 514-amino-acid polypeptide reads, in one-letter code: Nucleus accumbens-associated protein 1 (514 aa).

The BTB domain maps to 30–94 (CDVSVVVKGH…CYTGRLSMNM (65 aa)). Lysine 167 participates in a covalent cross-link: Glycyl lysine isopeptide (Lys-Gly) (interchain with G-Cter in SUMO1); alternate. Lysine 167 participates in a covalent cross-link: Glycyl lysine isopeptide (Lys-Gly) (interchain with G-Cter in SUMO2); alternate. A Glycyl lysine isopeptide (Lys-Gly) (interchain with G-Cter in SUMO2) cross-link involves residue lysine 182. Disordered stretches follow at residues 183–218 (RLWD…NRMP) and 241–279 (GPSM…EEGT). Residue serine 187 is modified to Phosphoserine. Polar residues predominate over residues 242–251 (PSMSERTSPG). Position 245 is a phosphoserine; by PKC (serine 245). Low complexity predominate over residues 252-264 (TSSAYTSDSPSSY). Acidic residues predominate over residues 267–279 (EEDEEEDAGEEGT). Residues lysine 304, lysine 438, lysine 466, and lysine 485 each participate in a glycyl lysine isopeptide (Lys-Gly) (interchain with G-Cter in SUMO2) cross-link. In terms of domain architecture, BEN spans 360–457 (GTNVYITRAQ…DMCTNARRVV (98 aa)). Residues serine 492 and serine 496 each carry the phosphoserine modification.

In terms of assembly, homooligomer; mediated by the BTB domain. Both isoforms interact with HDAC3 and HDAC4. Interacts (via BTB domain) with CUL3, PSMD7 and RCOR1. Post-translationally, phosphorylated by protein kinase C (PKC). Highly expressed in the hippocampus, brain cortex, cerebellum and brainstem. Expressed in the nucleus accumbens, olfactory tubercle, the striatum, frontal and parietal cortex and ventral pallidum. Weakly expressed in the heart, liver, kidney, spleen, testis, and skeletal muscle. Isoform 2 is expressed in the brain and liver, less abundantly expressed in the brain than isoform 1.

The protein resides in the nucleus. It localises to the cytoplasm. In terms of biological role, functions as a transcriptional repressor. Isoform 1 is a stronger transcriptional repressor than isoform 2. Seems to function as a transcriptional corepressor in neuronal cells through recruitment of HDAC3 and HDAC4. Contributes to tumor progression, and tumor cell proliferation and survival. This may be mediated at least in part through repressing transcriptional activity of GADD45GIP1. Required for recruiting the proteasome from the nucleus to the cytoplasm and dendritic spines. In Rattus norvegicus (Rat), this protein is Nucleus accumbens-associated protein 1 (Nacc1).